A 400-amino-acid polypeptide reads, in one-letter code: Telomere repeat-binding protein 6 (400 aa).

In terms of domain architecture, Ubiquitin-like spans 173–252 (VKFGIKSLNI…DDENLGSLGF (80 aa)). Residues 310 to 369 (VQRRIRRPFTVSEVEALVQAVERLGTGRWRDVKSHAFNHVNHRTYVDLKDKWKTLVHTAK) enclose the HTH myb-type domain. The segment at residues 338–365 (WRDVKSHAFNHVNHRTYVDLKDKWKTLV) is a DNA-binding region (H-T-H motif).

As to quaternary structure, homodimer. Expressed ubiquitously.

It localises to the nucleus. In terms of biological role, binds specifically to the plant telomeric double-stranded DNA sequences. At least 4 repeats of telomeric sequences are required for binding. The protein is Telomere repeat-binding protein 6 (TRP6) of Arabidopsis thaliana (Mouse-ear cress).